A 127-amino-acid chain; its full sequence is Protein ApaG (127 aa).

The ApaG domain maps to 3–127 (NDQKYDIKVQ…FILSVPRVLH (125 aa)).

In Nitrosomonas eutropha (strain DSM 101675 / C91 / Nm57), this protein is Protein ApaG.